Here is a 248-residue protein sequence, read N- to C-terminus: Probable proteasome subunit alpha type-3 (248 aa).

This sequence belongs to the peptidase T1A family. As to quaternary structure, the 26S proteasome consists of a 20S proteasome core and two 19S regulatory subunits. The 20S proteasome core is composed of 28 subunits that are arranged in four stacked rings, resulting in a barrel-shaped structure. The two end rings are each formed by seven alpha subunits, and the two central rings are each formed by seven beta subunits. The catalytic chamber with the active sites is on the inside of the barrel.

The protein resides in the cytoplasm. It localises to the nucleus. In terms of biological role, the proteasome is a multicatalytic proteinase complex which is characterized by its ability to cleave peptides with Arg, Phe, Tyr, Leu, and Glu adjacent to the leaving group at neutral or slightly basic pH. The proteasome has an ATP-dependent proteolytic activity. This is Probable proteasome subunit alpha type-3 from Schizosaccharomyces pombe (strain 972 / ATCC 24843) (Fission yeast).